The sequence spans 287 residues: Ribosomal RNA small subunit methyltransferase A (287 aa).

S-adenosyl-L-methionine is bound by residues asparagine 28, leucine 30, glycine 55, glutamate 76, aspartate 101, and asparagine 125.

This sequence belongs to the class I-like SAM-binding methyltransferase superfamily. rRNA adenine N(6)-methyltransferase family. RsmA subfamily.

It localises to the cytoplasm. It carries out the reaction adenosine(1518)/adenosine(1519) in 16S rRNA + 4 S-adenosyl-L-methionine = N(6)-dimethyladenosine(1518)/N(6)-dimethyladenosine(1519) in 16S rRNA + 4 S-adenosyl-L-homocysteine + 4 H(+). Specifically dimethylates two adjacent adenosines (A1518 and A1519) in the loop of a conserved hairpin near the 3'-end of 16S rRNA in the 30S particle. May play a critical role in biogenesis of 30S subunits. The chain is Ribosomal RNA small subunit methyltransferase A from Alkaliphilus metalliredigens (strain QYMF).